The sequence spans 1078 residues: mRNA 3'-end-processing protein rna14 (1078 aa).

Disordered regions lie at residues A15–A209 and Q222–V251. A compositionally biased stretch (polar residues) spans K42 to S55. Low complexity predominate over residues S58–S68. Polar residues predominate over residues D82 to P115. The segment covering V126–Y139 has biased composition (acidic residues). 2 stretches are compositionally biased toward polar residues: residues N151–T170 and F190–D206. HAT repeat units lie at residues N280–E312, N314–R345, Q356–S391, Q405–G438, T475–G508, and A520–L552. Disordered stretches follow at residues E632 to K663 and P851 to P950. Positions G879–P894 are enriched in polar residues. Over residues R896 to R907 the composition is skewed to basic and acidic residues. The segment covering R931–S949 has biased composition (polar residues).

The protein localises to the nucleus. It localises to the cytoplasm. Functionally, component of the cleavage factor IA (CFIA) complex, which is involved in the endonucleolytic cleavage during polyadenylation-dependent pre-mRNA 3'-end formation. The polypeptide is mRNA 3'-end-processing protein rna14 (rna14) (Aspergillus oryzae (strain ATCC 42149 / RIB 40) (Yellow koji mold)).